Here is a 424-residue protein sequence, read N- to C-terminus: UDP-N-acetylglucosamine 1-carboxyvinyltransferase (424 aa).

22 to 23 (KN) provides a ligand contact to phosphoenolpyruvate. Arg-96 lines the UDP-N-acetyl-alpha-D-glucosamine pocket. Cys-120 functions as the Proton donor in the catalytic mechanism. Position 120 is a 2-(S-cysteinyl)pyruvic acid O-phosphothioketal (Cys-120). UDP-N-acetyl-alpha-D-glucosamine contacts are provided by residues 125-129 (RPVDQ), Asp-312, and Ile-334.

It belongs to the EPSP synthase family. MurA subfamily.

The protein resides in the cytoplasm. It catalyses the reaction phosphoenolpyruvate + UDP-N-acetyl-alpha-D-glucosamine = UDP-N-acetyl-3-O-(1-carboxyvinyl)-alpha-D-glucosamine + phosphate. Its pathway is cell wall biogenesis; peptidoglycan biosynthesis. Its function is as follows. Cell wall formation. Adds enolpyruvyl to UDP-N-acetylglucosamine. This is UDP-N-acetylglucosamine 1-carboxyvinyltransferase from Polynucleobacter asymbioticus (strain DSM 18221 / CIP 109841 / QLW-P1DMWA-1) (Polynucleobacter necessarius subsp. asymbioticus).